A 330-amino-acid polypeptide reads, in one-letter code: BTB/POZ domain-containing adapter for CUL3-mediated RhoA degradation protein 1 (330 aa).

Residues 1-34 (MSAEASGSSGGHAVTVSGSSPSSSSHVGEEKPGR) form a disordered region. Positions 40 to 108 (KYVKLNVGGT…LRDGTVPLPD (69 aa)) constitute a BTB domain. Residues 282–291 (GGVSSSGAGQ) are compositionally biased toward low complexity. The disordered stretch occupies residues 282 to 304 (GGVSSSGAGQSEEEGAGAGGGDR).

It belongs to the BACURD family.

Its subcellular location is the nucleus. Functionally, substrate-specific adapter of a BCR (BTB-CUL3-RBX1) E3 ubiquitin-protein ligase complex required for synaptic transmission. The BCR(KCTD13) E3 ubiquitin ligase complex mediates the ubiquitination of RHOA, leading to its degradation by the proteasome, thereby regulating the actin cytoskeleton and promoting synaptic transmission. This is BTB/POZ domain-containing adapter for CUL3-mediated RhoA degradation protein 1 from Danio rerio (Zebrafish).